A 441-amino-acid chain; its full sequence is Arginine biosynthesis bifunctional protein ArgJ, mitochondrial (441 aa).

Substrate-binding residues include Thr177, Lys204, Thr215, Glu301, Asn436, and Ser441. Thr215 functions as the Nucleophile in the catalytic mechanism.

It belongs to the ArgJ family. As to quaternary structure, heterodimer of an alpha and a beta chain. The alpha and beta chains are autoproteolytically processed from a single precursor protein within the mitochondrion.

It is found in the mitochondrion matrix. The enzyme catalyses N(2)-acetyl-L-ornithine + L-glutamate = N-acetyl-L-glutamate + L-ornithine. It carries out the reaction L-glutamate + acetyl-CoA = N-acetyl-L-glutamate + CoA + H(+). Its pathway is amino-acid biosynthesis; L-arginine biosynthesis; L-ornithine and N-acetyl-L-glutamate from L-glutamate and N(2)-acetyl-L-ornithine (cyclic): step 1/1. The protein operates within amino-acid biosynthesis; L-arginine biosynthesis; N(2)-acetyl-L-ornithine from L-glutamate: step 1/4. Its function is as follows. Catalyzes two activities which are involved in the cyclic version of arginine biosynthesis: the synthesis of acetylglutamate from glutamate and acetyl-CoA, and of ornithine by transacetylation between acetylornithine and glutamate. The sequence is that of Arginine biosynthesis bifunctional protein ArgJ, mitochondrial from Candida glabrata (strain ATCC 2001 / BCRC 20586 / JCM 3761 / NBRC 0622 / NRRL Y-65 / CBS 138) (Yeast).